We begin with the raw amino-acid sequence, 126 residues long: Desulfoferrodoxin (126 aa).

Cys-10, Cys-13, Cys-29, Cys-30, His-49, His-69, His-75, Cys-116, and His-119 together coordinate Fe cation.

The protein belongs to the desulfoferrodoxin family. As to quaternary structure, homodimer. The cofactor is Fe(3+). Requires Cu(2+) as cofactor.

It catalyses the reaction reduced [rubredoxin] + superoxide + 2 H(+) = oxidized [rubredoxin] + H2O2. Functionally, catalyzes the one-electron reduction of superoxide anion radical to hydrogen peroxide at a nonheme ferrous iron center. Plays a fundamental role in case of oxidative stress via its superoxide detoxification activity. The polypeptide is Desulfoferrodoxin (dfx) (Nitratidesulfovibrio vulgaris (strain ATCC 29579 / DSM 644 / CCUG 34227 / NCIMB 8303 / VKM B-1760 / Hildenborough) (Desulfovibrio vulgaris)).